Reading from the N-terminus, the 882-residue chain is Translation initiation factor IF-2 (882 aa).

A disordered region spans residues 28 to 296 (GIRKSADDSV…LQQGFQKPAQ (269 aa)). Over residues 67–81 (STLNIPGTGGKSKSV) the composition is skewed to polar residues. Basic and acidic residues predominate over residues 92 to 209 (VKRDPQEAER…RMAEENKWTD (118 aa)). A compositionally biased stretch (basic residues) spans 244-258 (GRGRNAKAARPKKGN). The segment covering 259–272 (KHAESKADREEARA) has biased composition (basic and acidic residues). In terms of domain architecture, tr-type G spans 381–550 (PRAPVVTIMG…LLQAEVLELK (170 aa)). Residues 390 to 397 (GHVDHGKT) are G1. 390–397 (GHVDHGKT) is a GTP binding site. The interval 415–419 (GITQH) is G2. The tract at residues 436–439 (DTPG) is G3. Residues 436 to 440 (DTPGH) and 490 to 493 (NKID) each bind GTP. The segment at 490 to 493 (NKID) is G4. The interval 526–528 (SAK) is G5. N6-acetyllysine is present on lysine 800.

Belongs to the TRAFAC class translation factor GTPase superfamily. Classic translation factor GTPase family. IF-2 subfamily.

It is found in the cytoplasm. Its function is as follows. One of the essential components for the initiation of protein synthesis. Protects formylmethionyl-tRNA from spontaneous hydrolysis and promotes its binding to the 30S ribosomal subunits. Also involved in the hydrolysis of GTP during the formation of the 70S ribosomal complex. This chain is Translation initiation factor IF-2, found in Shigella boydii serotype 4 (strain Sb227).